Reading from the N-terminus, the 302-residue chain is 33 kDa chaperonin (302 aa).

Disulfide bonds link Cys234–Cys236 and Cys267–Cys270.

The protein belongs to the HSP33 family. Under oxidizing conditions two disulfide bonds are formed involving the reactive cysteines. Under reducing conditions zinc is bound to the reactive cysteines and the protein is inactive.

Its subcellular location is the cytoplasm. Functionally, redox regulated molecular chaperone. Protects both thermally unfolding and oxidatively damaged proteins from irreversible aggregation. Plays an important role in the bacterial defense system toward oxidative stress. The polypeptide is 33 kDa chaperonin (Neisseria gonorrhoeae (strain NCCP11945)).